The sequence spans 479 residues: ATP synthase subunit beta, chloroplastic (479 aa).

156–163 (GGAGVGKT) is a binding site for ATP.

This sequence belongs to the ATPase alpha/beta chains family. In terms of assembly, F-type ATPases have 2 components, CF(1) - the catalytic core - and CF(0) - the membrane proton channel. CF(1) has five subunits: alpha(3), beta(3), gamma(1), delta(1), epsilon(1). CF(0) has four main subunits: a(1), b(1), b'(1) and c(9-12).

It is found in the plastid. The protein resides in the chloroplast thylakoid membrane. It carries out the reaction ATP + H2O + 4 H(+)(in) = ADP + phosphate + 5 H(+)(out). Functionally, produces ATP from ADP in the presence of a proton gradient across the membrane. The catalytic sites are hosted primarily by the beta subunits. This chain is ATP synthase subunit beta, chloroplastic, found in Trichomanes davallioides (Kilau fern).